The following is a 664-amino-acid chain: Macrolide export ATP-binding/permease protein MacB (664 aa).

In terms of domain architecture, ABC transporter spans 8–245; the sequence is LELVDVHRTY…AGPSVPLTLD (238 aa). An ATP-binding site is contributed by 44-51; that stretch reads GSSGSGKS. 4 helical membrane passes run 283 to 303, 543 to 563, 602 to 622, and 627 to 647; these read LLSVLGILVGVASVIAMMALG, GAIAAISLLVGGIGIMNIMLV, IIGIIAGIGISALLAVFAGWA, and IVSIVLATFFSAITGIFFGLW.

It belongs to the ABC transporter superfamily. Macrolide exporter (TC 3.A.1.122) family. As to quaternary structure, homodimer.

It is found in the cell inner membrane. Its function is as follows. Non-canonical ABC transporter that contains transmembrane domains (TMD), which form a pore in the inner membrane, and an ATP-binding domain (NBD), which is responsible for energy generation. Confers resistance against macrolides. The protein is Macrolide export ATP-binding/permease protein MacB of Chlorobium luteolum (strain DSM 273 / BCRC 81028 / 2530) (Pelodictyon luteolum).